Here is a 555-residue protein sequence, read N- to C-terminus: MRGLATTLLIGAAAAATYPAQQVLKAPEEVLEKTHKTSSSSLAETLARPLHELNEELKSLTAEAEEVWEQVSNMFPGALDNIPFFSSPKKHTRRPDSHWDHIVRGADVQNIWVENENGEKEREVGGRLETFDLRVKAVDPSSLGIDPDVKQYSGYLDDNENDKHLFYWFFESRNDPKNDPVVLWLNGGPGCSSLTGLFFELGPSSIGKNIKPIYNPYSWNSNASVIFLDQPVNVGFSYSGNSVSETSAAAKDVYALLTLFFKQFPEYATQDFHIAGESYAGHYIPSFASEILSHKKRNINLKSVLIGNGLTDGFTQYEYYRPMACGDGGYPAVLDESACRSMDNALGRCQSMIQSCYDSESAWTCVPASIYCNNALLGPYQRTGQNVYDIRKPCEGSSLCYADLEYISTYLNQAEVLKAVGAEVDSFDSCNFDINRNFLFKGDWMKPFHKLVPGILEEIPVLIYAGDADFICNWLGNKAWSDALEWSGHEEYAATELEDLEIVDNEHKGKKIGQVKSSGNLTFMRLFGGGHMVPYDQPEASLEFFNRWIGGEWTK.

The signal sequence occupies residues 1–17; it reads MRGLATTLLIGAAAAAT. Residues 18–136 constitute a propeptide that is removed on maturation; the sequence is YPAQQVLKAP…RLETFDLRVK (119 aa). 5 cysteine pairs are disulfide-bonded: C191–C430, C325–C339, C349–C372, C356–C365, and C394–C400. N222 is a glycosylation site (N-linked (GlcNAc...) asparagine). S278 is an active-site residue. D469 is an active-site residue. The N-linked (GlcNAc...) asparagine glycan is linked to N520. Residue H531 is part of the active site.

The protein belongs to the peptidase S10 family.

Its subcellular location is the vacuole. It carries out the reaction Release of a C-terminal amino acid with broad specificity.. Functionally, vacuolar carboxypeptidase involved in degradation of small peptides. Digests preferentially peptides containing an aliphatic or hydrophobic residue in P1' position, as well as methionine, leucine or phenylalanine in P1 position of ester substrate. This is Carboxypeptidase Y homolog A (cpyA) from Talaromyces marneffei (strain ATCC 18224 / CBS 334.59 / QM 7333) (Penicillium marneffei).